We begin with the raw amino-acid sequence, 349 residues long: Adenosine deaminase (349 aa).

Residues His25 and His27 each contribute to the Zn(2+) site. Substrate-binding residues include His27, Asp29, and Gly182. His209 contacts Zn(2+). The active-site Proton donor is Glu212. Asp289 is a Zn(2+) binding site.

The protein belongs to the metallo-dependent hydrolases superfamily. Adenosine and AMP deaminases family. Adenosine deaminase subfamily. Zn(2+) serves as cofactor.

The enzyme catalyses adenosine + H2O + H(+) = inosine + NH4(+). It catalyses the reaction 2'-deoxyadenosine + H2O + H(+) = 2'-deoxyinosine + NH4(+). Catalyzes the hydrolytic deamination of adenosine and 2-deoxyadenosine. In Streptococcus mutans serotype c (strain ATCC 700610 / UA159), this protein is Adenosine deaminase.